We begin with the raw amino-acid sequence, 392 residues long: Succinate--CoA ligase [ADP-forming] subunit beta (392 aa).

One can recognise an ATP-grasp domain in the interval 9 to 248; sequence KDILRKFGVA…ISEEDPFEVE (240 aa). ATP is bound by residues K50, 57–59, E103, M106, and E111; that span reads GRG. Mg(2+) is bound by residues N203 and D217. Substrate-binding positions include N268 and 325–327; that span reads GIV.

The protein belongs to the succinate/malate CoA ligase beta subunit family. In terms of assembly, heterotetramer of two alpha and two beta subunits. Requires Mg(2+) as cofactor.

The catalysed reaction is succinate + ATP + CoA = succinyl-CoA + ADP + phosphate. The enzyme catalyses GTP + succinate + CoA = succinyl-CoA + GDP + phosphate. Its pathway is carbohydrate metabolism; tricarboxylic acid cycle; succinate from succinyl-CoA (ligase route): step 1/1. Succinyl-CoA synthetase functions in the citric acid cycle (TCA), coupling the hydrolysis of succinyl-CoA to the synthesis of either ATP or GTP and thus represents the only step of substrate-level phosphorylation in the TCA. The beta subunit provides nucleotide specificity of the enzyme and binds the substrate succinate, while the binding sites for coenzyme A and phosphate are found in the alpha subunit. This is Succinate--CoA ligase [ADP-forming] subunit beta from Chlorobium phaeobacteroides (strain DSM 266 / SMG 266 / 2430).